We begin with the raw amino-acid sequence, 219 residues long: Ras-related protein Rab-3D (219 aa).

An N-acetylalanine modification is found at A2. 29–37 is a binding site for GDP; it reads GNSSVGKTS. Positions 31, 32, 33, 34, 35, 36, 37, 49, and 53 each coordinate GTP. A Mg(2+)-binding site is contributed by T36. Residues 49–58 carry the Switch 1 motif; the sequence is PAFVSTVGID. The Mg(2+) site is built by T54 and D77. Residue G80 coordinates GTP. A Switch 2 motif is present at residues 80–96; it reads GQERYRTITTAYYRGAM. T86 is modified (phosphothreonine; by LRRK2). The GTP site is built by N135, K136, D138, A166, and K167. GDP-binding positions include 135 to 138 and 165 to 167; these read NKCD and SAK. At S190 the chain carries Phosphoserine. The tract at residues 190–219 is disordered; sequence SLEPSSSPGSNGKGPALGDTPPPQPSSCSC. The span at 193-203 shows a compositional bias: low complexity; the sequence is PSSSPGSNGKG. Over residues 209–219 the composition is skewed to pro residues; it reads TPPPQPSSCSC. Residues C217 and C219 are each lipidated (S-geranylgeranyl cysteine). The residue at position 219 (C219) is a Cysteine methyl ester.

This sequence belongs to the small GTPase superfamily. Rab family. As to quaternary structure, interacts with RIMS1, RIMS2, RPH3A, RPH3AL and RAB3IP. The GTP-bound form interacts with REP15. Interacts with CHM and CHML; phosphorylation at Thr-86 disrupts these interactions. Interacts with MADD (via uDENN domain); the GTP-bound form is preferred for interaction. It depends on Mg(2+) as a cofactor. Post-translationally, phosphorylation of Thr-86 in the switch II region by LRRK2 prevents the association of RAB regulatory proteins, including CHM and CHML. As to expression, predominantly expressed in the adipocyte tissue, but is also expressed in several other organs including skin, spleen, heart and lung.

It localises to the cell membrane. It catalyses the reaction GTP + H2O = GDP + phosphate + H(+). Regulated by guanine nucleotide exchange factors (GEFs) which promote the exchange of bound GDP for free GTP. Regulated by GTPase activating proteins (GAPs) which increase the GTP hydrolysis activity. Inhibited by GDP dissociation inhibitors (GDIs) which prevent Rab-GDP dissociation. Its function is as follows. The small GTPases Rab are key regulators of intracellular membrane trafficking, from the formation of transport vesicles to their fusion with membranes. Rabs cycle between an inactive GDP-bound form and an active GTP-bound form that is able to recruit to membranes different sets of downstream effectors directly responsible for vesicle formation, movement, tethering and fusion. RAB3D may be involved in the insulin-induced exocytosis of GLUT4-containing vesicles in adipocytes. The polypeptide is Ras-related protein Rab-3D (Mus musculus (Mouse)).